The following is a 259-amino-acid chain: Acyl-[acyl-carrier-protein]--UDP-N-acetylglucosamine O-acyltransferase (259 aa).

Belongs to the transferase hexapeptide repeat family. LpxA subfamily. Homotrimer.

It is found in the cytoplasm. The enzyme catalyses a (3R)-hydroxyacyl-[ACP] + UDP-N-acetyl-alpha-D-glucosamine = a UDP-3-O-[(3R)-3-hydroxyacyl]-N-acetyl-alpha-D-glucosamine + holo-[ACP]. It participates in glycolipid biosynthesis; lipid IV(A) biosynthesis; lipid IV(A) from (3R)-3-hydroxytetradecanoyl-[acyl-carrier-protein] and UDP-N-acetyl-alpha-D-glucosamine: step 1/6. Its function is as follows. Involved in the biosynthesis of lipid A, a phosphorylated glycolipid that anchors the lipopolysaccharide to the outer membrane of the cell. The polypeptide is Acyl-[acyl-carrier-protein]--UDP-N-acetylglucosamine O-acyltransferase (Akkermansia muciniphila (strain ATCC BAA-835 / DSM 22959 / JCM 33894 / BCRC 81048 / CCUG 64013 / CIP 107961 / Muc)).